The primary structure comprises 98 residues: MALTKADLAETLFEKVGLSKRDAKETVEVFFEEIKQALESGEQVKLSGFGNFDLREKSERPGRNPKTGEDIPISARRVVTFKPGQKLKARVEDLPVEK.

Residues 53-69 (DLREKSERPGRNPKTGE) show a composition bias toward basic and acidic residues. Residues 53–73 (DLREKSERPGRNPKTGEDIPI) form a disordered region.

It belongs to the bacterial histone-like protein family. In terms of assembly, heterodimer of an alpha and a beta chain.

Functionally, this protein is one of the two subunits of integration host factor, a specific DNA-binding protein that functions in genetic recombination as well as in transcriptional and translational control. This is Integration host factor subunit alpha from Aliivibrio salmonicida (strain LFI1238) (Vibrio salmonicida (strain LFI1238)).